The primary structure comprises 198 residues: FMN-dependent NADH:quinone oxidoreductase (198 aa).

FMN is bound by residues S10, 16-18 (SQS), 94-97 (MYNF), and 138-141 (TRGG).

It belongs to the azoreductase type 1 family. In terms of assembly, homodimer. Requires FMN as cofactor.

It carries out the reaction 2 a quinone + NADH + H(+) = 2 a 1,4-benzosemiquinone + NAD(+). The enzyme catalyses N,N-dimethyl-1,4-phenylenediamine + anthranilate + 2 NAD(+) = 2-(4-dimethylaminophenyl)diazenylbenzoate + 2 NADH + 2 H(+). Its function is as follows. Quinone reductase that provides resistance to thiol-specific stress caused by electrophilic quinones. Functionally, also exhibits azoreductase activity. Catalyzes the reductive cleavage of the azo bond in aromatic azo compounds to the corresponding amines. This is FMN-dependent NADH:quinone oxidoreductase from Shewanella baltica (strain OS185).